The following is a 280-amino-acid chain: MTSKSTLSYAERARQHDNPIARKLFEIAEAKKSNVVVSADLTTTKELLELADHLGPYIAVLKTHIDIVSDFNKETVFGLKSLSEKHNFLIFEDRKFVDIGNTVQKQYHGGALRISEWAHLVNASILAGDGIVEALAQTGTSDAFEHKGERGLLMLAEMTTRGTFATGAYTKASIESAKKHSSFVIGFISNQALTSIETQIPATHMEDFIVFTTGVNRATKGDPLGQQYQTPEAAIKRGADFIISGRGIYATSDPIQAAKLYQNEGWAAYETRIKNRSTGY.

Substrate-binding positions include Asp40, 62–64 (KTH), 93–102 (DRKFVDIGNT), Tyr228, and Arg246. Residue Lys95 is the Proton donor of the active site.

This sequence belongs to the OMP decarboxylase family.

The catalysed reaction is orotidine 5'-phosphate + H(+) = UMP + CO2. It participates in pyrimidine metabolism; UMP biosynthesis via de novo pathway; UMP from orotate: step 2/2. The polypeptide is Orotidine 5'-phosphate decarboxylase (PYRG) (Solorina crocea).